A 414-amino-acid chain; its full sequence is Putative competence-damage inducible protein (414 aa).

Belongs to the CinA family.

This chain is Putative competence-damage inducible protein, found in Listeria monocytogenes serotype 4b (strain CLIP80459).